Reading from the N-terminus, the 292-residue chain is Undecaprenyl-diphosphatase (292 aa).

The next 7 helical transmembrane spans lie at 1-21 (MSLVSAALFGLVQALTEFLPV), 46-66 (FVTIIQAGTTLAVLIYFRADI), 88-108 (ARLGWYILLGTLPAALAGKLL), 114-134 (ALGNWVIAGSLVGLGLVLLAA), 192-212 (FLLSVPITLAAGAYKLWSTVP), 225-245 (VVGTVVSAVAGYLVIDWLLAW), and 253-273 (VFVVWRIAAGAAIAALILSGV).

Belongs to the UppP family.

The protein localises to the cell inner membrane. The catalysed reaction is di-trans,octa-cis-undecaprenyl diphosphate + H2O = di-trans,octa-cis-undecaprenyl phosphate + phosphate + H(+). Catalyzes the dephosphorylation of undecaprenyl diphosphate (UPP). Confers resistance to bacitracin. This chain is Undecaprenyl-diphosphatase, found in Anaeromyxobacter dehalogenans (strain 2CP-C).